Reading from the N-terminus, the 132-residue chain is UPF0299 membrane protein CKO_00648 (132 aa).

A run of 4 helical transmembrane segments spans residues 7-27 (IIWQ…AGIF), 31-51 (LLPI…VLLA), 63-83 (GCYV…VGVM), and 93-113 (FGPV…VVSW).

The protein belongs to the UPF0299 family.

The protein resides in the cell inner membrane. The polypeptide is UPF0299 membrane protein CKO_00648 (Citrobacter koseri (strain ATCC BAA-895 / CDC 4225-83 / SGSC4696)).